A 1652-amino-acid polypeptide reads, in one-letter code: Maestro heat-like repeat-containing protein family member 1 (1652 aa).

HEAT repeat units follow at residues 3 to 41, 260 to 300, 344 to 382, 385 to 423, 1369 to 1407, 1410 to 1448, and 1616 to 1652; these read ETYAKRLSAILLDAVTDKDPQMQEQVCGALCDFGESKPA, EEQL…VGSR, CCSPDRLLAFLLPKLDTSNERTRVGTLQVLRHVINAAAA, EVKKPVILSSMKLPLLDTNNKVKRAVVQVVSAMAHHGYL, LMLLESLLYNLMARQKDTSARVRRLVLHGLANITLGSPD, QTHSPQLLTAMIGGLDDGDDPHSLVALEAMVGLARLMDL, and QVDLEQLLTALQLLLKDPALKVRLKAVKTLGRLVKFA.

Belongs to the MROH1 family. Homooligomer; homooligomerizes at lysosome scission sites.

It localises to the lysosome membrane. Functionally, lysosome fission factor. Recruited to lysosomes by RAB7 (RAB7A or RAB7B) at scission sites and homooligomerizes to mediate the constriction and scission of lysosomal tubules. May sever membranes by inserting amphipathic helices into one bilayer leaflet. Lysosome fission is required to maintain their steady-state number, shape, size, composition and function, and to accomplish regeneration. The chain is Maestro heat-like repeat-containing protein family member 1 (MROH1) from Bos taurus (Bovine).